Here is a 461-residue protein sequence, read N- to C-terminus: tRNA modification GTPase MnmE (461 aa).

The (6S)-5-formyl-5,6,7,8-tetrahydrofolate site is built by Arg-23, Glu-88, and Arg-127. Residues 223–383 (GLNTVIVGKP…LKECIKNLFF (161 aa)) form the TrmE-type G domain. Asn-233 is a binding site for K(+). Residues 233–238 (NVGKSS), 252–258 (TEIPGTT), and 277–280 (DTAG) contribute to the GTP site. Residue Ser-237 participates in Mg(2+) binding. K(+) contacts are provided by Thr-252, Ile-254, and Thr-257. Thr-258 lines the Mg(2+) pocket. Position 461 (Lys-461) interacts with (6S)-5-formyl-5,6,7,8-tetrahydrofolate.

This sequence belongs to the TRAFAC class TrmE-Era-EngA-EngB-Septin-like GTPase superfamily. TrmE GTPase family. As to quaternary structure, homodimer. Heterotetramer of two MnmE and two MnmG subunits. Requires K(+) as cofactor.

The protein localises to the cytoplasm. Exhibits a very high intrinsic GTPase hydrolysis rate. Involved in the addition of a carboxymethylaminomethyl (cmnm) group at the wobble position (U34) of certain tRNAs, forming tRNA-cmnm(5)s(2)U34. In Clostridium botulinum (strain Loch Maree / Type A3), this protein is tRNA modification GTPase MnmE.